The chain runs to 217 residues: DNA transformation protein TfoX (217 aa).

This sequence belongs to the Sxy/TfoX family.

Required for DNA transformation. Positively regulates genes required for DNA transformation (late competence-specific genes) in association with CRP. Required for expression of the late competence-specific gene, com101A. Required for expression of the dprABC operon. This Haemophilus influenzae (strain ATCC 51907 / DSM 11121 / KW20 / Rd) protein is DNA transformation protein TfoX.